Reading from the N-terminus, the 433-residue chain is Mannan endo-1,4-beta-mannosidase 2 (433 aa).

A signal peptide spans 1-28 (MAAPTGNGPVIPILGFLTCVAFIYLSFG). A glycan (N-linked (GlcNAc...) asparagine) is linked at N46. Residue W98 coordinates substrate. N169 is a glycosylation site (N-linked (GlcNAc...) asparagine). N214 lines the substrate pocket. The active-site Proton donor is the E215. Y295 is a binding site for substrate. The Nucleophile role is filled by E335. W377 contributes to the substrate binding site.

This sequence belongs to the glycosyl hydrolase 5 (cellulase A) family. As to expression, expressed in roots, stems, leaves and seeds.

The protein localises to the secreted. The enzyme catalyses Random hydrolysis of (1-&gt;4)-beta-D-mannosidic linkages in mannans, galactomannans and glucomannans.. This is Mannan endo-1,4-beta-mannosidase 2 (MAN2) from Arabidopsis thaliana (Mouse-ear cress).